A 187-amino-acid chain; its full sequence is Large ribosomal subunit protein uL22 (187 aa).

This sequence belongs to the universal ribosomal protein uL22 family.

The chain is Large ribosomal subunit protein uL22 (RPL17) from Theileria annulata.